A 257-amino-acid polypeptide reads, in one-letter code: Methylthioribulose-1-phosphate dehydratase (257 aa).

The tract at residues 1-33 is disordered; the sequence is MVSSQEKMASISDIIQKDEDSGSEKTESQDKEH. The span at 15-33 shows a compositional bias: basic and acidic residues; the sequence is IQKDEDSGSEKTESQDKEH. Cys-107 contacts substrate. Zn(2+)-binding residues include His-125 and His-127. The active-site Proton donor/acceptor is Glu-149. Position 205 (His-205) interacts with Zn(2+).

It belongs to the aldolase class II family. MtnB subfamily. Zn(2+) serves as cofactor.

It is found in the cytoplasm. The enzyme catalyses 5-(methylsulfanyl)-D-ribulose 1-phosphate = 5-methylsulfanyl-2,3-dioxopentyl phosphate + H2O. Its pathway is amino-acid biosynthesis; L-methionine biosynthesis via salvage pathway; L-methionine from S-methyl-5-thio-alpha-D-ribose 1-phosphate: step 2/6. Its function is as follows. Catalyzes the dehydration of methylthioribulose-1-phosphate (MTRu-1-P) into 2,3-diketo-5-methylthiopentyl-1-phosphate (DK-MTP-1-P). Functions in the methionine salvage pathway. May play a role in apoptosis. This chain is Methylthioribulose-1-phosphate dehydratase, found in Esox lucius (Northern pike).